A 140-amino-acid polypeptide reads, in one-letter code: Putative nickel-responsive regulator (140 aa).

H76, H87, H89, and C95 together coordinate Ni(2+).

The protein belongs to the transcriptional regulatory CopG/NikR family. Requires Ni(2+) as cofactor.

In terms of biological role, transcriptional regulator. The polypeptide is Putative nickel-responsive regulator (Rhodopseudomonas palustris (strain BisB5)).